The following is a 320-amino-acid chain: 1,5-anhydro-D-fructose reductase (320 aa).

Tyr40 functions as the Proton donor in the catalytic mechanism. His102 is a substrate binding site. NADP(+) contacts are provided by residues Gln194 and 265–277 (IPGSITPSHIKEN).

Belongs to the aldo/keto reductase family. As to quaternary structure, monomer.

It is found in the cytoplasm. The catalysed reaction is 1,5-anhydro-D-glucitol + NADP(+) = 1,5-anhydro-D-fructose + NADPH + H(+). Inhibited by p-chloromercuribenzoic acid and alkyliodines. Its function is as follows. Catalyzes the NADPH-dependent reduction of 1,5-anhydro-D-fructose (AF) to 1,5-anhydro-D-glucitol. This chain is 1,5-anhydro-D-fructose reductase (AKR1E2), found in Macaca fascicularis (Crab-eating macaque).